The sequence spans 529 residues: O-acetylstemmadenine oxidase (529 aa).

The first 23 residues, 1–23 (MIKKVPIVLSIFCFLLLLSSSHG), serve as a signal peptide directing secretion. A disulfide bond links cysteine 32 and cysteine 92. The N-linked (GlcNAc...) asparagine glycan is linked to asparagine 52. The 175-residue stretch at 70–244 (KSPKPLAIIT…VSWKVKLVKV (175 aa)) folds into the FAD-binding PCMH-type domain. Residues 102–108 (IRSGGAD), serine 113, 168–169 (VS), 173–177 (GIGGH), and phenylalanine 183 each bind FAD. N-linked (GlcNAc...) asparagine glycosylation occurs at asparagine 293. Residue tryptophan 465 coordinates FAD.

Belongs to the oxygen-dependent FAD-linked oxidoreductase family. The cofactor is FAD. As to expression, expressed in leaf epidermis.

The protein localises to the endoplasmic reticulum. It localises to the vacuole. Its subcellular location is the vesicle. It catalyses the reaction O-acetyl-15alpha-stemmadenine + O2 = precondylocarpine acetate + H2O2. It participates in alkaloid biosynthesis. Functionally, component of the seco-iridoid and derivatives monoterpenoid indole alkaloids (MIAs, e.g. vinblastine, catharanthine, tabersonine, vincadifformine, vindoline, vincristine, quinine and strychnine) biosynthesis pathway. Converts O-acetylstemmadenine (OAS) to reactive acetylated intermediates, likely dihydroprecondylocarpine acetate. This Catharanthus roseus (Madagascar periwinkle) protein is O-acetylstemmadenine oxidase.